Consider the following 266-residue polypeptide: Electron transfer flavoprotein subunit beta (266 aa).

This sequence belongs to the ETF beta-subunit/FixA family. In terms of assembly, heterodimer of an alpha and a beta subunit. FAD is required as a cofactor. AMP serves as cofactor.

Its function is as follows. The electron transfer flavoprotein serves as a specific electron acceptor for other dehydrogenases. It transfers the electrons to the main respiratory chain via ETF-ubiquinone oxidoreductase (ETF dehydrogenase). The protein is Electron transfer flavoprotein subunit beta (etfB) of Mycobacterium bovis (strain ATCC BAA-935 / AF2122/97).